The sequence spans 619 residues: Serine/threonine-protein kinase pkn1 (619 aa).

Residues 15–302 (YRILYRKGQS…SSQNLPQAVL (288 aa)) form the Protein kinase domain. Residue 21 to 29 (KGQSLWSED) participates in ATP binding. Residue glutamate 141 is the Proton acceptor of the active site.

This sequence belongs to the protein kinase superfamily. Ser/Thr protein kinase family. In terms of processing, autophosphorylated on serine and threonine residues.

The catalysed reaction is L-seryl-[protein] + ATP = O-phospho-L-seryl-[protein] + ADP + H(+). It catalyses the reaction L-threonyl-[protein] + ATP = O-phospho-L-threonyl-[protein] + ADP + H(+). In terms of biological role, together with the serine/threonine kinase PknD, may play a role in the specific interactions with host proteins during intracellular growth. The sequence is that of Serine/threonine-protein kinase pkn1 (pkn1) from Chlamydia pneumoniae (Chlamydophila pneumoniae).